Reading from the N-terminus, the 276-residue chain is Putative translation initiation factor eIF-2B subunit 2-like (276 aa).

This sequence belongs to the eIF-2B alpha/beta/delta subunits family. Complex of two different subunits.

In terms of biological role, catalyzes the exchange of initiation factor 2-bound GDP for GTP. This is Putative translation initiation factor eIF-2B subunit 2-like from Pyrococcus furiosus (strain ATCC 43587 / DSM 3638 / JCM 8422 / Vc1).